The primary structure comprises 471 residues: Methyltransferase OMS1, mitochondrial (471 aa).

A mitochondrion-targeting transit peptide spans 1–39 (MIVFRRFPTCLLHHIRQPASRSLLLESQRRSLSFTSYKY). The Mitochondrial matrix segment spans residues 40–103 (NSSHIDDDKS…AIARSEKFSK (64 aa)). Residues 104–123 (GMTKYMIGAYVIFLIYGLFF) traverse the membrane as a helical segment. Residues 124–471 (TKKLFAKDKE…LEPVPPVSKS (348 aa)) lie on the Mitochondrial intermembrane side of the membrane. Residues 450–463 (FEKKDDMASKKELE) show a composition bias toward basic and acidic residues. The interval 450–471 (FEKKDDMASKKELEPVPPVSKS) is disordered.

It belongs to the methyltransferase superfamily. METL family.

It localises to the mitochondrion inner membrane. In terms of biological role, mitochondrial methyltransferase which suppresses respiratory defects caused by OXA1 mutations when overexpressed. This is Methyltransferase OMS1, mitochondrial (OMS1) from Saccharomyces cerevisiae (strain ATCC 204508 / S288c) (Baker's yeast).